The sequence spans 431 residues: Adenylosuccinate synthetase (431 aa).

GTP-binding positions include 13 to 19 (GDEGKGK) and 41 to 43 (GHT). The active-site Proton acceptor is the Asp-14. Positions 14 and 41 each coordinate Mg(2+). IMP contacts are provided by residues 14 to 17 (DEGK), 39 to 42 (NAGH), Thr-130, Arg-144, Gln-225, Thr-240, and Arg-304. Catalysis depends on His-42, which acts as the Proton donor. Residue 300-306 (ATTGRAR) participates in substrate binding. GTP contacts are provided by residues Arg-306, 332 to 334 (KLD), and 415 to 417 (STG).

This sequence belongs to the adenylosuccinate synthetase family. As to quaternary structure, homodimer. Mg(2+) serves as cofactor.

The protein resides in the cytoplasm. The enzyme catalyses IMP + L-aspartate + GTP = N(6)-(1,2-dicarboxyethyl)-AMP + GDP + phosphate + 2 H(+). It participates in purine metabolism; AMP biosynthesis via de novo pathway; AMP from IMP: step 1/2. Its function is as follows. Plays an important role in the de novo pathway of purine nucleotide biosynthesis. Catalyzes the first committed step in the biosynthesis of AMP from IMP. This Ectopseudomonas mendocina (strain ymp) (Pseudomonas mendocina) protein is Adenylosuccinate synthetase.